Consider the following 295-residue polypeptide: DegV domain-containing protein MG326 (295 aa).

In terms of domain architecture, DegV spans 4–292 (TAIITDSTAS…IDAFSISLLI (289 aa)). 2 residues coordinate hexadecanoate: Thr63 and Ser95.

Its function is as follows. May bind long-chain fatty acids, such as palmitate, and may play a role in lipid transport or fatty acid metabolism. The protein is DegV domain-containing protein MG326 of Mycoplasma genitalium (strain ATCC 33530 / DSM 19775 / NCTC 10195 / G37) (Mycoplasmoides genitalium).